Reading from the N-terminus, the 699-residue chain is MPGGSSGNDNVRVVVRCRPLNSKETGQGFKSVVKMDEMRGTVQVTNPNAPSGEPPKSFTFDTVFAPGAKQTDVYNQTARPIVDAIIEGYNGTIFAYGQTGTGKTFTMEGVRSQPELRGIIPNSFAHIFGHIAKEQENVRFLVRVSYLEIYNEEVKDLLGKDQQHRLEVKERPDVGVYVKDLSAFVVNNADDMDRIMTLGNKNRSVGATNMNESSSRSHAIFTITLERSDMGLDKEQHVRVGKLHMVDLAGSERQTKTGATGQRLKEATKINLSLSTLGNVISSLVDGKSTHIPYRNSKLTRLLQDSLGGNAKTVMCANIGPAEYNYDETISTLRYANRAKNIKNKAKINEDPKDALLREFQKEIEELKKQISESGEGLDDDEESGSEESGDEEAGEGGVKKKRKGKNPKRKLSPEIMAAMQKKIDEEKKALEEKKDMVEEDRNTVHRELQRRESELHKAQDDQKILNEKLNAIQKKLIVGGVDLLAKSEEQEQLLEQSALEMKERMAKQESMRKMMEEREQERMDIEEKYSSLQDEAHGKTKKLKKVWTMLMQAKSEVADMQAEHQREMEALLENVRELSRELRLSMLIIDSFIPQEFQEMIEQYVHWNEDIGEWQLKCVAYTGNNMRKQTPVADKDKSLAYGEADLSNVFLTYNLEGGGMKYKPSQGKSGRPKTSSGRPKTGKKKQASMASSIDALLQ.

In terms of domain architecture, Kinesin motor spans 10–342; the sequence is NVRVVVRCRP…LRYANRAKNI (333 aa). An ATP-binding site is contributed by 97 to 104; the sequence is GQTGTGKT. Positions 341 to 619 form a coiled coil; that stretch reads NIKNKAKINE…EDIGEWQLKC (279 aa). Disordered stretches follow at residues 369 to 415, 432 to 456, and 660 to 699; these read KQIS…LSPE, EEKK…ESEL, and GMKY…ALLQ. Residues 376–395 show a composition bias toward acidic residues; it reads EGLDDDEESGSEESGDEEAG. The segment covering 400–411 has biased composition (basic residues); that stretch reads KKKRKGKNPKRK. A globular region spans residues 620–699; it reads VAYTGNNMRK…MASSIDALLQ (80 aa). Polar residues predominate over residues 667 to 679; the sequence is QGKSGRPKTSSGR.

This sequence belongs to the TRAFAC class myosin-kinesin ATPase superfamily. Kinesin family. Kinesin II subfamily. In terms of assembly, heterotrimer of a 115 kDa subunit (KAP115) and two kinesin-like subunits of 95 kDa (KRP95) and 85 kDa (KRP85). The N-terminus is blocked.

Its subcellular location is the cytoplasm. It localises to the cytoskeleton. The chain is Kinesin-II 85 kDa subunit (KRP85) from Strongylocentrotus purpuratus (Purple sea urchin).